Reading from the N-terminus, the 231-residue chain is PX domain-containing protein 1 (231 aa).

One can recognise a PX domain in the interval 1–134 (MASAVFEGTS…TFFERSPLDQ (134 aa)).

This Homo sapiens (Human) protein is PX domain-containing protein 1 (PXDC1).